The primary structure comprises 401 residues: Formate-dependent phosphoribosylglycinamide formyltransferase (401 aa).

Residues 22–23 (EL) and E82 contribute to the N(1)-(5-phospho-beta-D-ribosyl)glycinamide site. Residues R115, K157, 162 to 167 (SSGKGQ), 197 to 200 (EGFI), and E205 each bind ATP. Residues 120–315 (RLAAESLGLP…EFELHARAIL (196 aa)) enclose the ATP-grasp domain. Residues E274 and E286 each contribute to the Mg(2+) site. Residues D293, K362, and 369 to 370 (RR) contribute to the N(1)-(5-phospho-beta-D-ribosyl)glycinamide site.

It belongs to the PurK/PurT family. As to quaternary structure, homodimer.

It carries out the reaction N(1)-(5-phospho-beta-D-ribosyl)glycinamide + formate + ATP = N(2)-formyl-N(1)-(5-phospho-beta-D-ribosyl)glycinamide + ADP + phosphate + H(+). Its pathway is purine metabolism; IMP biosynthesis via de novo pathway; N(2)-formyl-N(1)-(5-phospho-D-ribosyl)glycinamide from N(1)-(5-phospho-D-ribosyl)glycinamide (formate route): step 1/1. Functionally, involved in the de novo purine biosynthesis. Catalyzes the transfer of formate to 5-phospho-ribosyl-glycinamide (GAR), producing 5-phospho-ribosyl-N-formylglycinamide (FGAR). Formate is provided by PurU via hydrolysis of 10-formyl-tetrahydrofolate. This is Formate-dependent phosphoribosylglycinamide formyltransferase from Cupriavidus taiwanensis (strain DSM 17343 / BCRC 17206 / CCUG 44338 / CIP 107171 / LMG 19424 / R1) (Ralstonia taiwanensis (strain LMG 19424)).